The chain runs to 183 residues: Disulfide bond formation protein B 2 (183 aa).

At 1–9 (MSLACSRSL) the chain is on the cytoplasmic side. Residues 10 to 26 (FFMAFTAGILALGASYY) form a helical membrane-spanning segment. At 27–44 (LEYAVGLVPCSLCLVQRL) the chain is on the periplasmic side. The cysteines at positions 36 and 39 are disulfide-linked. Residues 45–61 (FMSVLTLCCGLAAVHGP) form a helical membrane-spanning segment. Residues 62–68 (QRVGLSL) are Cytoplasmic-facing. Residues 69-85 (YWMVTLLSSLGGTTAAW) form a helical membrane-spanning segment. Over 86–142 (RQVLFQSDSLQELAHCAPNPEEMFSSLPWLCALMRMFNDTADCAELSWTLFDLSIPE) the chain is Periplasmic. The cysteines at positions 101 and 128 are disulfide-linked. Residues 143 to 161 (WSLLFFVGMSILAVYQLLR) traverse the membrane as a helical segment. The Cytoplasmic portion of the chain corresponds to 162-183 (QVWMALQRPLSGQPSHPALVRD).

It belongs to the DsbB family.

The protein localises to the cell inner membrane. Required for disulfide bond formation in some periplasmic proteins. Acts by oxidizing the DsbA protein. This is Disulfide bond formation protein B 2 from Pseudomonas fluorescens (strain Pf0-1).